Consider the following 476-residue polypeptide: Major facilitator superfamily domain-containing protein 12 (476 aa).

The residue at position 1 (Met1) is an N-acetylmethionine. The Cytoplasmic portion of the chain corresponds to 1-25; it reads MSPPSDDAGPGPPRTLSLAARLSFA. The helical transmembrane segment at 26 to 46 threads the bilayer; the sequence is VGHFLNDLCAGMWFTYLLLFL. The Lumenal segment spans residues 47 to 55; sequence HSVRGYSSR. A helical membrane pass occupies residues 56–76; that stretch reads GAGLLLLLGQVADGLCTPLVG. Over 77–94 the chain is Cytoplasmic; the sequence is YEADRASCVRCGPRKAWH. Residues 95–115 traverse the membrane as a helical segment; sequence LAGTVCVLLSFPFIFSPCLGC. The Lumenal segment spans residues 116–121; sequence GEATPE. A helical membrane pass occupies residues 122-142; it reads WAALLYYGPFIVVFQFGWAAT. Over 143–167 the chain is Cytoplasmic; sequence QIAHLSLIPELVTSDHEKVELTALR. Residues 168–188 traverse the membrane as a helical segment; it reads YAFTVVANITVYGAAWLLLHL. Topologically, residues 189–213 are lumenal; it reads QGSAHGEQDISVGDQLGVQDVPVFR. Residues 214 to 234 traverse the membrane as a helical segment; sequence NLALLVVGVGAIFSLLFHLGT. The Cytoplasmic portion of the chain corresponds to 235–284; sequence KEGHRSQHWGNEPNEHTPLVAPAAQPLLLWKHWLREPAFYQVGMLYMTTR. A Phosphothreonine modification is found at Thr251. Residues 285–305 traverse the membrane as a helical segment; that stretch reads LIVNLSQTYIAMYLTYSLSLP. Lys306 is a topological domain (lumenal). A helical transmembrane segment spans residues 307 to 327; it reads KFIATIPLVMYLSGFFSSFLM. The Cytoplasmic segment spans residues 328-343; that stretch reads KPVNRRIGRNMTYFTG. Transmembrane regions (helical) follow at residues 344-364 and 365-385; these read LLVI…GVAV and YGAA…SLAM. The Cytoplasmic portion of the chain corresponds to 386-398; the sequence is TADLIGPHTHSGA. Residues 399 to 419 traverse the membrane as a helical segment; sequence FVYGAMSFSDKVANGLAVMAV. The Lumenal segment spans residues 420-444; sequence QSLHPCPSELCCGACISFYHWVMTA. The helical transmembrane segment at 445-465 threads the bilayer; sequence VTGGVGVAAALALCSLLIWPI. Residues 466-476 lie on the Cytoplasmic side of the membrane; it reads RIRNRDPRDRP.

It belongs to the major facilitator superfamily. Post-translationally, phosphorylation at Thr-251 by MTOR via mTORC1 pathway promotes cysteine transport in lysosomes, thereby regulating lysosomal cysteine and cystine storage and redox homeostasis.

It is found in the melanosome membrane. The protein localises to the lysosome membrane. It carries out the reaction L-cysteine(in) = L-cysteine(out). Its function is as follows. Transporter that mediates the import of cysteine into melanosomes, thereby regulating skin/hair pigmentation. In melanosomes, cysteine import is required both for normal levels of cystine, the oxidized dimer of cysteine, and provide cysteine for the production of the cysteinyldopas used in pheomelanin synthesis, thereby regulating skin/hair pigmentation. Also catalyzes import of cysteine into lysosomes in non-pigmented cells, regulating lysosomal cystine and cysteine storage, which is essnetial for redox homeostasis. The protein is Major facilitator superfamily domain-containing protein 12 of Mus musculus (Mouse).